We begin with the raw amino-acid sequence, 189 residues long: Ribosome maturation factor RimP (189 aa).

It belongs to the RimP family.

The protein localises to the cytoplasm. Required for maturation of 30S ribosomal subunits. This Mycobacteroides abscessus (strain ATCC 19977 / DSM 44196 / CCUG 20993 / CIP 104536 / JCM 13569 / NCTC 13031 / TMC 1543 / L948) (Mycobacterium abscessus) protein is Ribosome maturation factor RimP.